The chain runs to 158 residues: Mitotic-spindle organizing protein 2B (158 aa).

Phosphoserine is present on Ser-34. Positions 84–158 are disordered; sequence RLASEPQDPA…PGKSPTRGST (75 aa). Low complexity predominate over residues 111–122; sequence GSAALGGALALA. Polar residues predominate over residues 128 to 140; the sequence is EGSSQRMPRQPSA. A Phosphoserine modification is found at Ser-152.

The protein belongs to the MOZART2 family. As to quaternary structure, associates with the gamma-tubulin ring complex (gTuRC) consisting of TUBGCP2, TUBGCP3, TUBGCP4, TUBGCP5 and TUBGCP6 and gamma-tubulin TUBG1 or TUBG2; within the complex, interacts with TUBGCP2; the interaction plays a role in gTuRC activation. Interacts with TUBG1.

It is found in the cytoplasm. The protein resides in the cytoskeleton. It localises to the microtubule organizing center. Its subcellular location is the centrosome. The protein localises to the spindle. Its function is as follows. Required for the recruitment and the assembly of the gamma-tubulin ring complex (gTuRC) at the centrosome. The gTuRC regulates the minus-end nucleation of alpha-beta tubulin heterodimers that grow into microtubule protafilaments, a critical step in centrosome duplication and spindle formation. This chain is Mitotic-spindle organizing protein 2B (MZT2B), found in Homo sapiens (Human).